Consider the following 98-residue polypeptide: Putative septation protein SpoVG (98 aa).

It belongs to the SpoVG family.

Its function is as follows. Essential for sporulation. Interferes with or is a negative regulator of the pathway leading to asymmetric septation. The chain is Putative septation protein SpoVG from Shouchella clausii (strain KSM-K16) (Alkalihalobacillus clausii).